The primary structure comprises 282 residues: Pantothenate synthetase (282 aa).

30–37 contributes to the ATP binding site; that stretch reads MGYLHAGH. The Proton donor role is filled by His37. Gln61 contributes to the (R)-pantoate binding site. Gln61 contacts beta-alanine. Residue 147 to 150 participates in ATP binding; the sequence is GKKD. A (R)-pantoate-binding site is contributed by Gln153. ATP-binding positions include Val176 and 184–187; that span reads MSSR.

It belongs to the pantothenate synthetase family. As to quaternary structure, homodimer.

Its subcellular location is the cytoplasm. The enzyme catalyses (R)-pantoate + beta-alanine + ATP = (R)-pantothenate + AMP + diphosphate + H(+). Its pathway is cofactor biosynthesis; (R)-pantothenate biosynthesis; (R)-pantothenate from (R)-pantoate and beta-alanine: step 1/1. Its function is as follows. Catalyzes the condensation of pantoate with beta-alanine in an ATP-dependent reaction via a pantoyl-adenylate intermediate. The protein is Pantothenate synthetase of Geotalea uraniireducens (strain Rf4) (Geobacter uraniireducens).